The following is a 336-amino-acid chain: Phosphoribosylformylglycinamidine cyclo-ligase (336 aa).

Belongs to the AIR synthase family.

It is found in the cytoplasm. It catalyses the reaction 2-formamido-N(1)-(5-O-phospho-beta-D-ribosyl)acetamidine + ATP = 5-amino-1-(5-phospho-beta-D-ribosyl)imidazole + ADP + phosphate + H(+). It functions in the pathway purine metabolism; IMP biosynthesis via de novo pathway; 5-amino-1-(5-phospho-D-ribosyl)imidazole from N(2)-formyl-N(1)-(5-phospho-D-ribosyl)glycinamide: step 2/2. In Thermoanaerobacter pseudethanolicus (strain ATCC 33223 / 39E) (Clostridium thermohydrosulfuricum), this protein is Phosphoribosylformylglycinamidine cyclo-ligase.